A 418-amino-acid chain; its full sequence is Adenylosuccinate synthetase 2 (418 aa).

Residues 12 to 18 and 40 to 42 contribute to the GTP site; these read GDEGKGR and GHT. The Proton acceptor role is filled by Asp13. Asp13 and Gly40 together coordinate Mg(2+). Residues 13–16, 38–41, Thr127, Lys141, Thr239, and Arg301 contribute to the IMP site; these read DEGK and NAGH. His41 acts as the Proton donor in catalysis. 297-303 provides a ligand contact to substrate; the sequence is AVTGRPR. GTP is bound by residues Arg303, 329–331, and 407–409; these read KID and SVG.

It belongs to the adenylosuccinate synthetase family. As to quaternary structure, homodimer. The cofactor is Mg(2+).

Its subcellular location is the cytoplasm. It catalyses the reaction IMP + L-aspartate + GTP = N(6)-(1,2-dicarboxyethyl)-AMP + GDP + phosphate + 2 H(+). It functions in the pathway purine metabolism; AMP biosynthesis via de novo pathway; AMP from IMP: step 1/2. Plays an important role in the de novo pathway of purine nucleotide biosynthesis. Catalyzes the first committed step in the biosynthesis of AMP from IMP. The polypeptide is Adenylosuccinate synthetase 2 (Pseudoalteromonas translucida (strain TAC 125)).